A 195-amino-acid polypeptide reads, in one-letter code: 4'-phosphopantetheinyl transferase AcpT (195 aa).

It belongs to the P-Pant transferase superfamily. Gsp/Sfp/HetI/AcpT family.

The enzyme catalyses apo-[ACP] + CoA = holo-[ACP] + adenosine 3',5'-bisphosphate + H(+). In terms of biological role, may be involved in an alternative pathway for phosphopantetheinyl transfer and holo-ACP synthesis in E.coli. The native apo-protein substrate is unknown. Is able to functionally replace AcpS in vivo but only when expressed at high levels. In Escherichia coli O157:H7, this protein is 4'-phosphopantetheinyl transferase AcpT (acpT).